A 289-amino-acid chain; its full sequence is Bifunctional protein FolD (289 aa).

NADP(+)-binding positions include 166 to 168 (GRS), Ser191, and Ile232.

It belongs to the tetrahydrofolate dehydrogenase/cyclohydrolase family. In terms of assembly, homodimer.

It carries out the reaction (6R)-5,10-methylene-5,6,7,8-tetrahydrofolate + NADP(+) = (6R)-5,10-methenyltetrahydrofolate + NADPH. It catalyses the reaction (6R)-5,10-methenyltetrahydrofolate + H2O = (6R)-10-formyltetrahydrofolate + H(+). It participates in one-carbon metabolism; tetrahydrofolate interconversion. Catalyzes the oxidation of 5,10-methylenetetrahydrofolate to 5,10-methenyltetrahydrofolate and then the hydrolysis of 5,10-methenyltetrahydrofolate to 10-formyltetrahydrofolate. This chain is Bifunctional protein FolD, found in Synechococcus elongatus (strain ATCC 33912 / PCC 7942 / FACHB-805) (Anacystis nidulans R2).